Here is a 159-residue protein sequence, read N- to C-terminus: Crossover junction endodeoxyribonuclease RuvC (159 aa).

Active-site residues include Asp7, Glu67, and Asp139. Mg(2+) is bound by residues Asp7, Glu67, and Asp139.

Belongs to the RuvC family. Homodimer which binds Holliday junction (HJ) DNA. The HJ becomes 2-fold symmetrical on binding to RuvC with unstacked arms; it has a different conformation from HJ DNA in complex with RuvA. In the full resolvosome a probable DNA-RuvA(4)-RuvB(12)-RuvC(2) complex forms which resolves the HJ. Requires Mg(2+) as cofactor.

The protein localises to the cytoplasm. The enzyme catalyses Endonucleolytic cleavage at a junction such as a reciprocal single-stranded crossover between two homologous DNA duplexes (Holliday junction).. In terms of biological role, the RuvA-RuvB-RuvC complex processes Holliday junction (HJ) DNA during genetic recombination and DNA repair. Endonuclease that resolves HJ intermediates. Cleaves cruciform DNA by making single-stranded nicks across the HJ at symmetrical positions within the homologous arms, yielding a 5'-phosphate and a 3'-hydroxyl group; requires a central core of homology in the junction. The consensus cleavage sequence is 5'-(A/T)TT(C/G)-3'. Cleavage occurs on the 3'-side of the TT dinucleotide at the point of strand exchange. HJ branch migration catalyzed by RuvA-RuvB allows RuvC to scan DNA until it finds its consensus sequence, where it cleaves and resolves the cruciform DNA. This is Crossover junction endodeoxyribonuclease RuvC from Thermosynechococcus vestitus (strain NIES-2133 / IAM M-273 / BP-1).